The sequence spans 925 residues: Alanine--tRNA ligase (925 aa).

His-611, His-615, Cys-714, and His-718 together coordinate Zn(2+).

The protein belongs to the class-II aminoacyl-tRNA synthetase family. Zn(2+) is required as a cofactor.

The protein resides in the cytoplasm. It carries out the reaction tRNA(Ala) + L-alanine + ATP = L-alanyl-tRNA(Ala) + AMP + diphosphate. Its function is as follows. Catalyzes the attachment of alanine to tRNA(Ala) in a two-step reaction: alanine is first activated by ATP to form Ala-AMP and then transferred to the acceptor end of tRNA(Ala). Also edits incorrectly charged Ser-tRNA(Ala) and Gly-tRNA(Ala) via its editing domain. The chain is Alanine--tRNA ligase from Methanosarcina acetivorans (strain ATCC 35395 / DSM 2834 / JCM 12185 / C2A).